Here is a 169-residue protein sequence, read N- to C-terminus: 2-C-methyl-D-erythritol 2,4-cyclodiphosphate synthase (169 aa).

Positions 13 and 15 each coordinate a divalent metal cation. Residues 13–15 (DVH) and 39–40 (HS) contribute to the 4-CDP-2-C-methyl-D-erythritol 2-phosphate site. His47 contacts a divalent metal cation. 4-CDP-2-C-methyl-D-erythritol 2-phosphate is bound by residues 61 to 63 (DIG), 66 to 70 (FPDTD), Phe144, and Arg147.

Belongs to the IspF family. As to quaternary structure, homotrimer. A divalent metal cation is required as a cofactor.

It catalyses the reaction 4-CDP-2-C-methyl-D-erythritol 2-phosphate = 2-C-methyl-D-erythritol 2,4-cyclic diphosphate + CMP. It functions in the pathway isoprenoid biosynthesis; isopentenyl diphosphate biosynthesis via DXP pathway; isopentenyl diphosphate from 1-deoxy-D-xylulose 5-phosphate: step 4/6. In terms of biological role, involved in the biosynthesis of isopentenyl diphosphate (IPP) and dimethylallyl diphosphate (DMAPP), two major building blocks of isoprenoid compounds. Catalyzes the conversion of 4-diphosphocytidyl-2-C-methyl-D-erythritol 2-phosphate (CDP-ME2P) to 2-C-methyl-D-erythritol 2,4-cyclodiphosphate (ME-CPP) with a corresponding release of cytidine 5-monophosphate (CMP). The polypeptide is 2-C-methyl-D-erythritol 2,4-cyclodiphosphate synthase (Cupriavidus necator (strain ATCC 17699 / DSM 428 / KCTC 22496 / NCIMB 10442 / H16 / Stanier 337) (Ralstonia eutropha)).